Consider the following 555-residue polypeptide: Vacuolar fusion protein MON1 homolog A (555 aa).

Basic and acidic residues predominate over residues 1–12 (MAADMQRKRSSE). Positions 1–90 (MAADMQRKRS…PPLATDMRQI (90 aa)) are disordered. Ser31 and Ser56 each carry phosphoserine. Phosphothreonine is present on Thr61. The residue at position 91 (Ser91) is a Phosphoserine. The interval 112 to 149 (MLPGSSEDWPESPGAARRPATEPPRDGAGEGDEEEAAE) is disordered. A compositionally biased stretch (basic and acidic residues) spans 130–139 (PATEPPRDGA).

This sequence belongs to the MON1/SAND family. Interacts with CCZ1. Found in a complex with RMC1, CCZ1, MON1A and MON1B. The MON1A-CCZ1B complex interacts with RIMOC1. The MON1A-CCZ1B complex interacts with RAB7A and this interaction is enhanced in the presence of RIMOC1.

Plays an important role in membrane trafficking through the secretory apparatus. Not involved in endocytic trafficking to lysosomes. Acts in concert with CCZ1, as a guanine exchange factor (GEF) for RAB7, promotes the exchange of GDP to GTP, converting it from an inactive GDP-bound form into an active GTP-bound form. This Bos taurus (Bovine) protein is Vacuolar fusion protein MON1 homolog A (MON1A).